The chain runs to 300 residues: Centromere protein O (300 aa).

2 coiled-coil regions span residues 18–42 (LAHL…QSVQ) and 83–109 (NQTV…QAYH). Serine 35 is subject to Phosphoserine.

The protein belongs to the CENP-O/MCM21 family. In terms of assembly, component of the CENPA-CAD complex, composed of CENPI, CENPK, CENPL, CENPO, CENPP, CENPQ, CENPR and CENPS. The CENPA-CAD complex interacts with the CENPA-NAC complex, at least composed of CENPA, CENPC, CENPH, CENPM, CENPN, CENPT and CENPU.

The protein localises to the nucleus. It is found in the chromosome. Its subcellular location is the centromere. It localises to the kinetochore. Component of the CENPA-CAD (nucleosome distal) complex, a complex recruited to centromeres which is involved in assembly of kinetochore proteins, mitotic progression and chromosome segregation. May be involved in incorporation of newly synthesized CENPA into centromeres via its interaction with the CENPA-NAC complex. Modulates the kinetochore-bound levels of NDC80 complex. This Homo sapiens (Human) protein is Centromere protein O (CENPO).